Consider the following 212-residue polypeptide: Pyridoxine/pyridoxamine 5'-phosphate oxidase (212 aa).

FMN-binding positions include 59 to 64 (RMVLMK), 74 to 75 (YS), K81, and Q103. K64 provides a ligand contact to substrate. 2 residues coordinate substrate: Y121 and R125. Residues 138–139 (QS) and W183 each bind FMN. Residue 189–191 (RLH) coordinates substrate. Residue R193 coordinates FMN.

This sequence belongs to the pyridoxamine 5'-phosphate oxidase family. As to quaternary structure, homodimer. Requires FMN as cofactor.

The enzyme catalyses pyridoxamine 5'-phosphate + O2 + H2O = pyridoxal 5'-phosphate + H2O2 + NH4(+). The catalysed reaction is pyridoxine 5'-phosphate + O2 = pyridoxal 5'-phosphate + H2O2. It functions in the pathway cofactor metabolism; pyridoxal 5'-phosphate salvage; pyridoxal 5'-phosphate from pyridoxamine 5'-phosphate: step 1/1. The protein operates within cofactor metabolism; pyridoxal 5'-phosphate salvage; pyridoxal 5'-phosphate from pyridoxine 5'-phosphate: step 1/1. Functionally, catalyzes the oxidation of either pyridoxine 5'-phosphate (PNP) or pyridoxamine 5'-phosphate (PMP) into pyridoxal 5'-phosphate (PLP). The sequence is that of Pyridoxine/pyridoxamine 5'-phosphate oxidase from Rhodopseudomonas palustris (strain BisB5).